The sequence spans 749 residues: cGMP-dependent protein kinase egl-4 (749 aa).

Residues 30–96 (EAHELQKLIP…LEQKAQSAAS (67 aa)) are a coiled coil. Residues 87-111 (LEQKAQSAASPGQPPSPSPRTDQLG) form a disordered region. 3',5'-cyclic GMP-binding positions include 234 to 237 (GELA), 244 to 245 (RT), Arg-349, 358 to 361 (GERA), 368 to 369 (RT), and Tyr-403. Positions 438–698 (VKRLATLGVG…VNDIRKHRWF (261 aa)) constitute a Protein kinase domain. Residues 444–452 (LGVGGFGRV) and Lys-468 contribute to the ATP site. Positions 461–473 (KSKTYALKALKKK) match the Nuclear localization signal motif. The active-site Proton acceptor is the Asp-562. The 51-residue stretch at 699–749 (MGFDWEGLRTKTLKPPILPKVNNPADVTNFDNYPPDNDVPPDEFSGWDEGF) folds into the AGC-kinase C-terminal domain. Positions 723–749 (ADVTNFDNYPPDNDVPPDEFSGWDEGF) are disordered.

It belongs to the protein kinase superfamily. AGC Ser/Thr protein kinase family. cGMP subfamily. Mg(2+) serves as cofactor. Post-translationally, autophosphorylated.

It is found in the cytoplasm. The protein localises to the nucleus. It catalyses the reaction L-seryl-[protein] + ATP = O-phospho-L-seryl-[protein] + ADP + H(+). The enzyme catalyses L-threonyl-[protein] + ATP = O-phospho-L-threonyl-[protein] + ADP + H(+). Its activity is regulated as follows. Binding of cGMP results in enzyme activation. In terms of biological role, promotes chemoreceptor gene expression in response to increased cGMP levels by antagonizing the gene repression functions of the class II HDAC hda-4 and the mef-2 transcription factor. Regulates gene expression via recruitment of a histone deacetylase complex containing hda-2, saeg-1 and saeg-2. Represses body size and lifespan through the dbl-1 and insulin pathways, respectively. May also signal through daf-3 and/or daf-5. Role in egg-laying, dauer formation and motility. Regulates behavioral responses to various chemosensory stimuli in sensory neurons. Required for the initiation of long term adaptation to prolonged odor exposure which results in a decrease in odor seeking behavior. May regulate this process by phosphorylating tax-2, a subunit of cyclic nucleotide-gated channel tax-2/tax-4. In ASH sensory neurons, negatively regulates avoidance behavior to some bitter tastants, such as quinine, probably by phosphorylating rgs-2 and rgs-3 which are 2 regulator of G-protein signaling proteins. In AWB sensory neurons, involved in avoidance behavior to some repellent odors. In ASE left (ASEL) sensory neuron, involved in the sensing of environmental alkalinity downstream of receptor-type guanylate cyclase gcy-14. In sensory neurons, involved in the signaling pathway downstream of insulin, TGF-beta and receptor-type guanylate cyclase responsible for inducing quiescence after food intake. Might play a role in aversive olfactory learning in AWC neurons when an odor is associated with food deprivation, depending on the ins-1/age-1 signal from the AIA to the AWC neurons. Probably by regulating neuronal transmission downstream of lin-3 and receptor lin-23 and phospholipase plc-3 in ALA neurons, involved in the decrease in locomotion during the quiescent state that precedes each larval molt. This is cGMP-dependent protein kinase egl-4 from Caenorhabditis briggsae.